We begin with the raw amino-acid sequence, 541 residues long: Putative transferase YhbX (541 aa).

At 1 to 60 the chain is on the periplasmic side; sequence MTVFNKFARTFKSHWLLYLCVIVFGITNLVASSGAHMVQRLLFFVLTILVVKRISSLPLR. Residues 61–81 form a helical membrane-spanning segment; it reads LLVAAPFVLLTAADMSISLYS. At 82–110 the chain is on the cytoplasmic side; that stretch reads WCTFGTTFNDGFAISVLQSDPDEVVKMLG. The helical transmembrane segment at 111-131 threads the bilayer; it reads MYIPYLCAFAFLSLLFLAVII. Topologically, residues 132–141 are periplasmic; that stretch reads KYDVSLPTKK. The chain crosses the membrane as a helical span at residues 142–162; the sequence is VTGILLLIVISGSLFSACQFA. Over 163-264 the chain is Cytoplasmic; it reads YKDAKNKKAF…RKQIKLFNQA (102 aa). Residues 265–285 form a helical membrane-spanning segment; that stretch reads ISGAPYTALSVPLSLTADSVL. At 286-541 the chain is on the periplasmic side; it reads SHDIHNYPDN…QGNPTPEGQG (256 aa).

Belongs to the phosphoethanolamine transferase family.

It is found in the cell inner membrane. Its function is as follows. Probably does not transfer phosphoethanolamine to lipid A. This chain is Putative transferase YhbX (yhbX), found in Escherichia coli (strain K12).